A 550-amino-acid polypeptide reads, in one-letter code: Phosphomannomutase (550 aa).

Ser148 acts as the Phosphoserine intermediate in catalysis. Ser148, Asp300, Asp302, and Asp304 together coordinate Mg(2+).

This sequence belongs to the phosphohexose mutase family. Mg(2+) serves as cofactor.

The enzyme catalyses alpha-D-mannose 1-phosphate = D-mannose 6-phosphate. This Mycoplasma genitalium (strain ATCC 33530 / DSM 19775 / NCTC 10195 / G37) (Mycoplasmoides genitalium) protein is Phosphomannomutase (manB).